Consider the following 66-residue polypeptide: Large ribosomal subunit protein bL35 (66 aa).

Polar residues predominate over residues 18–27 (ATGKIKSTQS). Positions 18–41 (ATGKIKSTQSAKRHGMTKRSKRSI) are disordered. The span at 28-41 (AKRHGMTKRSKRSI) shows a compositional bias: basic residues.

It belongs to the bacterial ribosomal protein bL35 family.

This is Large ribosomal subunit protein bL35 from Ehrlichia ruminantium (strain Gardel).